We begin with the raw amino-acid sequence, 189 residues long: Apolipoprotein D (189 aa).

Positions 1 to 20 (MVTMLMFLATLAGLFTTAKG) are cleaved as a signal peptide. The residue at position 21 (Gln-21) is a Pyrrolidone carboxylic acid. Disulfide bonds link Cys-28–Cys-134 and Cys-61–Cys-185. Residues Asn-65 and Asn-98 are each glycosylated (N-linked (GlcNAc...) asparagine).

The protein belongs to the calycin superfamily. Lipocalin family. As to quaternary structure, homodimer. As to expression, highest levels of expression in brain, testis, virgin mammary gland and salivary gland. Moderate levels in skeletal muscle, lactating mammary gland and thymus. Low levels in lung and lymph node. No expression in kidney, pancreas, liver or spleen.

It is found in the secreted. Its function is as follows. APOD occurs in the macromolecular complex with lecithin-transport and binding of bilin. Appears to be able to transport a variety of ligands in a number of different contexts. This chain is Apolipoprotein D (Apod), found in Mus musculus (Mouse).